Here is a 181-residue protein sequence, read N- to C-terminus: Cell division protein ZapC (181 aa).

This sequence belongs to the ZapC family. In terms of assembly, interacts directly with FtsZ.

The protein resides in the cytoplasm. Contributes to the efficiency of the cell division process by stabilizing the polymeric form of the cell division protein FtsZ. Acts by promoting interactions between FtsZ protofilaments and suppressing the GTPase activity of FtsZ. The sequence is that of Cell division protein ZapC from Shewanella woodyi (strain ATCC 51908 / MS32).